The primary structure comprises 275 residues: Ribosomal RNA small subunit methyltransferase A (275 aa).

S-adenosyl-L-methionine is bound by residues N15, L17, G42, E63, D88, and N111.

The protein belongs to the class I-like SAM-binding methyltransferase superfamily. rRNA adenine N(6)-methyltransferase family. RsmA subfamily.

The protein resides in the cytoplasm. It catalyses the reaction adenosine(1518)/adenosine(1519) in 16S rRNA + 4 S-adenosyl-L-methionine = N(6)-dimethyladenosine(1518)/N(6)-dimethyladenosine(1519) in 16S rRNA + 4 S-adenosyl-L-homocysteine + 4 H(+). Functionally, specifically dimethylates two adjacent adenosines (A1518 and A1519) in the loop of a conserved hairpin near the 3'-end of 16S rRNA in the 30S particle. May play a critical role in biogenesis of 30S subunits. This is Ribosomal RNA small subunit methyltransferase A from Geobacter metallireducens (strain ATCC 53774 / DSM 7210 / GS-15).